The primary structure comprises 108 residues: Peptidyl-prolyl cis-trans isomerase FKBP1A (108 aa).

In terms of domain architecture, PPIase FKBP-type spans 20-108 (GQTCVVHYTG…VFDVELLKLE (89 aa)). K53 carries the N6-acetyllysine; alternate modification. N6-succinyllysine; alternate is present on K53.

It belongs to the FKBP-type PPIase family. FKBP1 subfamily. Interacts with TGFBR1; prevents TGFBR1 phosphorylation by TGFBR2 and stabilizes it in the inactive conformation. Interacts with ACVR1B and SMAD7. Identified in a complex composed of RYR1, PDE4D, PKA, FKBP1A and protein phosphatase 1 (PP1). Interacts directly with RYR2 and RYR3. Interacts with GLMN; rapamycin and FK506 abolish the interaction with GLMN in a dose dependent manner. Interacts directly with RYR1.

Its subcellular location is the cytoplasm. The protein localises to the cytosol. It localises to the sarcoplasmic reticulum membrane. The catalysed reaction is [protein]-peptidylproline (omega=180) = [protein]-peptidylproline (omega=0). Its activity is regulated as follows. Inhibited by both FK506 and rapamycin. Keeps in an inactive conformation TGFBR1, the TGF-beta type I serine/threonine kinase receptor, preventing TGF-beta receptor activation in absence of ligand. Recruits SMAD7 to ACVR1B which prevents the association of SMAD2 and SMAD3 with the activin receptor complex, thereby blocking the activin signal. May modulate the RYR1 calcium channel activity. PPIases accelerate the folding of proteins. It catalyzes the cis-trans isomerization of proline imidic peptide bonds in oligopeptides. In Homo sapiens (Human), this protein is Peptidyl-prolyl cis-trans isomerase FKBP1A (FKBP1A).